Reading from the N-terminus, the 421-residue chain is Probable acid phosphatase (421 aa).

D229 serves as the catalytic Proton donor.

It catalyses the reaction a phosphate monoester + H2O = an alcohol + phosphate. This chain is Probable acid phosphatase, found in Kluyveromyces lactis (strain ATCC 8585 / CBS 2359 / DSM 70799 / NBRC 1267 / NRRL Y-1140 / WM37) (Yeast).